A 503-amino-acid polypeptide reads, in one-letter code: Na(+)-translocating NADH-quinone reductase subunit B (503 aa).

4 helical membrane passes run Met55–Ile75, Ile120–Ala140, Thr161–Val181, and Phe186–Phe206. Thr248 is subject to FMN phosphoryl threonine. Transmembrane regions (helical) follow at residues Thr361–Trp381, Phe387–Gly407, Phe417–Met437, Trp452–Tyr472, and Gly475–Val495.

It belongs to the NqrB/RnfD family. Composed of six subunits; NqrA, NqrB, NqrC, NqrD, NqrE and NqrF. It depends on FMN as a cofactor.

Its subcellular location is the cell inner membrane. It catalyses the reaction a ubiquinone + n Na(+)(in) + NADH + H(+) = a ubiquinol + n Na(+)(out) + NAD(+). Its function is as follows. NQR complex catalyzes the reduction of ubiquinone-1 to ubiquinol by two successive reactions, coupled with the transport of Na(+) ions from the cytoplasm to the periplasm. NqrA to NqrE are probably involved in the second step, the conversion of ubisemiquinone to ubiquinol. The polypeptide is Na(+)-translocating NADH-quinone reductase subunit B (Chlamydia abortus (strain DSM 27085 / S26/3) (Chlamydophila abortus)).